The sequence spans 436 residues: Citrate synthase (436 aa).

Catalysis depends on residues H311 and D370.

Belongs to the citrate synthase family.

It catalyses the reaction oxaloacetate + acetyl-CoA + H2O = citrate + CoA + H(+). The protein operates within carbohydrate metabolism; tricarboxylic acid cycle; isocitrate from oxaloacetate: step 1/2. This is Citrate synthase (gltA) from Rickettsia typhi (strain ATCC VR-144 / Wilmington).